Here is a 1214-residue protein sequence, read N- to C-terminus: Delta-latroinsectotoxin-Lt1a (1214 aa).

Residues 64-89 form a helix H2 is the probable transmembrane region of the tetrameric pore inserted in the target cell membrane region; it reads IGSIPVIGEVVGIVTAPIAIVSHITS. The tract at residues 250–269 is helix H8 is the probable transmembrane region of the tetrameric pore inserted in the target cell membrane; sequence ALYALFYGTQTYAAVMFFLL. ANK repeat units follow at residues 464 to 497, 501 to 532, 536 to 565, 570 to 600, 604 to 633, 637 to 666, 670 to 699, 706 to 734, 740 to 769, 773 to 802, 806 to 835, 839 to 868, 872 to 901, 906 to 936, and 966 to 994; these read DIHR…DIEA, NDRS…DIEL, NGFT…DVNA, TNLT…KVNE, DGFT…DKNA, SGLT…DLNI, NHMA…KVSI, NNWT…DINL, GNLT…NIEE, EGYT…DIEA, DNLT…DIGA, DGST…NLKE, NKYL…SLKD, EGRT…TLDE, and VKPT…PEGS. A propeptide spans 1020 to 1214 (C-terminal domain cleavage is required for toxin activation); that stretch reads IVKETNSRYL…IDVHQKMFLR (195 aa).

It belongs to the cationic peptide 01 (latrotoxin) family. 04 (delta-latroinsectotoxin) subfamily. Homotetramer in membrane. As to expression, expressed by the venom gland.

The protein localises to the secreted. The protein resides in the target cell membrane. In terms of biological role, insecticidal presynaptic neurotoxin that induces massive neurotransmitter release at insect (but not vertebrate) neuromuscular junctions. Native toxin forms cation-permeable pores (with high permeability to calcium) in lipid membranes locust muscle membrane and artificial lipid bilayers. May bind to insect neurexin-1 homolog, insect adhesion G protein-coupled receptor L1 homolog, and insect receptor-type tyrosine-protein phosphatase S homolog, and induces neurotransmitter exocytosis both by forming tetrameric pores in membranes and signaling via G protein-coupled receptor. Oligomerization is a process independent of divalent cations. In Latrodectus tredecimguttatus (Mediterranean black widow spider), this protein is Delta-latroinsectotoxin-Lt1a.